An 83-amino-acid chain; its full sequence is Small ribosomal subunit protein bS16 (83 aa).

The protein belongs to the bacterial ribosomal protein bS16 family.

The chain is Small ribosomal subunit protein bS16 from Azoarcus sp. (strain BH72).